We begin with the raw amino-acid sequence, 228 residues long: F-box protein At5g67140 (228 aa).

The F-box domain maps to 4 to 51 (EAAIDRLPLDLLAYIFSLATSFTVLAQASGVCKKWRKAVNQSMARRET).

The polypeptide is F-box protein At5g67140 (Arabidopsis thaliana (Mouse-ear cress)).